Consider the following 226-residue polypeptide: Cysteine and histidine-rich domain-containing protein RAR1 (226 aa).

Residues C12, C17, C31, H34, C49, C50, C66, and H71 each coordinate Zn(2+). Residues 12 to 71 (CQRIGCNAMFTDDDNPQGSCQFHASGPFFHDGMKEWSCCKQRSHDFSLFLEIPGCKTGKH) form the CHORD 1 domain. Positions 104-124 (CSRCRQGFFCSDHGSQPKEQI) match the CCCH motif. 8 residues coordinate Zn(2+): C159, C164, C178, H181, C196, C197, C213, and H218. Residues 159–218 (CKNKGCGQTFKERDNHETACSHHPGPAVFHDRLRGWKCCDVHVKEFDEFMEIPPCTKGWH) form the CHORD 2 domain.

As to quaternary structure, interacts with HSP90-1, HSP90-2, SGT1A and SGT1B. Forms a ternary complex with SGT1A and barley HSP90.

Required specifically for plant innate immunity. Is essential for resistance conferred by multiple R genes recognizing different bacterial and oomycete pathogen isolates like avirulent P.syringae or H.parasitica (downy mildew). Contributes additively with SGT1B to RPP5-dependent resistance. Functions as a positive regulator of RPS5 accumulation by assisting its stabilization. May function as co-chaperone of HSP90-2 to positively regulate the steady-state accumulation of RPM1 and protect it from SGT1-mediated degradation. Acts as a negative regulator of pathogen-associated molecular pattern (PAMP)-triggered immunity. The protein is Cysteine and histidine-rich domain-containing protein RAR1 (RAR1) of Arabidopsis thaliana (Mouse-ear cress).